We begin with the raw amino-acid sequence, 411 residues long: 2,3-bisphosphoglycerate-independent phosphoglycerate mutase (411 aa).

Belongs to the BPG-independent phosphoglycerate mutase family. A-PGAM subfamily.

The catalysed reaction is (2R)-2-phosphoglycerate = (2R)-3-phosphoglycerate. It participates in carbohydrate degradation; glycolysis; pyruvate from D-glyceraldehyde 3-phosphate: step 3/5. Functionally, catalyzes the interconversion of 2-phosphoglycerate and 3-phosphoglycerate. This chain is 2,3-bisphosphoglycerate-independent phosphoglycerate mutase, found in Thermococcus gammatolerans (strain DSM 15229 / JCM 11827 / EJ3).